We begin with the raw amino-acid sequence, 922 residues long: 1,4-alpha-glucan-branching enzyme 1, chloroplastic/amyloplastic (922 aa).

A chloroplast-targeting transit peptide spans 1 to 47; that stretch reads MVYTISGIRFPVLPSLHKSTLRCDRRASSHSFFLKNNSSSFSRTSLY. The tract at residues 83 to 130 is disordered; sequence LENPDITSEDAQNLEDLTMKDGNKYNIDESTSSYREVGDEKGSVTSSS. The segment covering 99–109 has biased composition (basic and acidic residues); it reads LTMKDGNKYNI. Catalysis depends on Asp-494, which acts as the Nucleophile. Glu-549 functions as the Proton donor in the catalytic mechanism. A disordered region spans residues 870 to 922; sequence VESEPIELSVEEAESEPIERSVEEVESETTQQSVEVESETTQQSVEVESETTQ. The segment covering 897–922 has biased composition (low complexity); the sequence is ETTQQSVEVESETTQQSVEVESETTQ.

The protein belongs to the glycosyl hydrolase 13 family. GlgB subfamily. As to quaternary structure, monomer. Expressed in roots, leaves, stipules, pods and flowers.

The protein localises to the plastid. It localises to the chloroplast. Its subcellular location is the amyloplast. It catalyses the reaction Transfers a segment of a (1-&gt;4)-alpha-D-glucan chain to a primary hydroxy group in a similar glucan chain.. It functions in the pathway glycan biosynthesis; starch biosynthesis. In terms of biological role, catalyzes the formation of the alpha-1,6-glucosidic linkages in starch by scission of a 1,4-alpha-linked oligosaccharide from growing alpha-1,4-glucan chains and the subsequent attachment of the oligosaccharide to the alpha-1,6 position. May preferentially transfer short chains during branching. Responsible for the synthesis of about 75% of the amylopectin found in the starch granules of mature embryos. This Pisum sativum (Garden pea) protein is 1,4-alpha-glucan-branching enzyme 1, chloroplastic/amyloplastic (SBEI).